The chain runs to 249 residues: Zinc finger AN1 and C2H2 domain-containing stress-associated protein 13 (249 aa).

AN1-type zinc fingers lie at residues 7 to 55 and 95 to 145; these read PDLG…RGDV and AVKK…KPES. The Zn(2+) site is built by Cys13, Cys18, Cys28, Cys31, Cys36, His39, His45, Cys47, Cys101, Cys106, Cys118, Cys121, Cys126, His129, His135, and Cys137. Residues 194 to 213 form a disordered region; it reads FASGNDGNSEKTQERNGKQN. The segment covering 201–210 has biased composition (basic and acidic residues); that stretch reads NSEKTQERNG. The C2H2-type zinc-finger motif lies at 220 to 243; it reads DVCPKCSRGFRDPVDLLKHIDKDH.

May be involved in environmental stress response. The chain is Zinc finger AN1 and C2H2 domain-containing stress-associated protein 13 (SAP13) from Arabidopsis thaliana (Mouse-ear cress).